A 221-amino-acid polypeptide reads, in one-letter code: UPF0758 protein Ent638_0101 (221 aa).

The region spanning 99–221 (PLLSPEMTKD…YVSFAEQGWI (123 aa)) is the MPN domain. Residues His170, His172, and Asp183 each coordinate Zn(2+). Residues 170–183 (HNHPSGCAEPSKAD) carry the JAMM motif motif.

The protein belongs to the UPF0758 family. YicR subfamily.

The sequence is that of UPF0758 protein Ent638_0101 from Enterobacter sp. (strain 638).